The chain runs to 301 residues: Acetylglutamate kinase (301 aa).

Substrate is bound by residues 71-72, R93, and N198; that span reads GG.

Belongs to the acetylglutamate kinase family. ArgB subfamily.

The protein localises to the cytoplasm. The catalysed reaction is N-acetyl-L-glutamate + ATP = N-acetyl-L-glutamyl 5-phosphate + ADP. The protein operates within amino-acid biosynthesis; L-arginine biosynthesis; N(2)-acetyl-L-ornithine from L-glutamate: step 2/4. Its function is as follows. Catalyzes the ATP-dependent phosphorylation of N-acetyl-L-glutamate. The sequence is that of Acetylglutamate kinase from Rhizorhabdus wittichii (strain DSM 6014 / CCUG 31198 / JCM 15750 / NBRC 105917 / EY 4224 / RW1) (Sphingomonas wittichii).